A 276-amino-acid chain; its full sequence is Elongation factor Ts (276 aa).

An involved in Mg(2+) ion dislocation from EF-Tu region spans residues 80-83; sequence TDFV.

This sequence belongs to the EF-Ts family.

Its subcellular location is the cytoplasm. In terms of biological role, associates with the EF-Tu.GDP complex and induces the exchange of GDP to GTP. It remains bound to the aminoacyl-tRNA.EF-Tu.GTP complex up to the GTP hydrolysis stage on the ribosome. This Acidothermus cellulolyticus (strain ATCC 43068 / DSM 8971 / 11B) protein is Elongation factor Ts.